The chain runs to 394 residues: T-cell acute lymphocytic leukemia protein 1 (394 aa).

Over residues 1 to 17 (MSLKMMERLSTDMDGTR) the composition is skewed to basic and acidic residues. A disordered region spans residues 1-49 (MSLKMMERLSTDMDGTRDVASPPARQDAAEPERTVELSGVKEGAAPNSP). Repeat copies occupy residues 83–89 (TELCRAT), 94–100 (TELCRAP), 105–111 (TELCRAP), 116–122 (TELCRAP), 127–133 (TELCRPP), 149–155 (SELCRAP), and 167–173 (TELCRPP). The segment at 83–173 (TELCRATLTP…TATTELCRPP (91 aa)) is 7 X 7 AA approximate repeats of [TS]-E-L-C-R-[AP]-P. The bHLH domain occupies 262-314 (VRRIFTNSRERWRQQNVNGAFAELRKLIPTHPPDKKLSKNEILRLAMKYINFL). A disordered region spans residues 347–394 (LSPNSSCGSSLDGAPSPDSYSEEHDALDSKHSRNLHQAMLPIDGSGQR). The segment covering 367–377 (SEEHDALDSKH) has biased composition (basic and acidic residues).

In terms of tissue distribution, first expressed in patches on the ventral side of the embryo in a region that will give rise to hematopoietic tissue. By late neurula stages, expressed throughout the ventral blood island region. By tailbud stages, expression extends to probable vascular progenitor cells, but is excluded from the presumptive liver anlage. Also expressed in the central nervous system at the tailbud stage.

Its subcellular location is the nucleus. Transcription factor that acts synergistically with lmo2 and gata1 to specify embryonic dorsal mesoderm to a hematopoietic fate. This Xenopus laevis (African clawed frog) protein is T-cell acute lymphocytic leukemia protein 1.